The following is a 429-amino-acid chain: MGCGASVPVDDDEIDPFLQDKRINDAIEQSLQLRQQNSKKGVKLLLLGAGESGKSTVLKQLKLLHKGGFTQQERRQYSHVIWCDVIQSMKVLIIQARKLKIKLDCDQPNNSLIPYKQIILRSDPLKQIDADVAGGTDFLNDFVVKYSEENKNKRRLKSTGTTDIWGKDDDSNINSDAINQALESSLNKDSEQFTRLSIAEAIHKLWKLDSGIKKCFDRSNEFQLEGSADYYFDNVFNFADTNYLSTDLDILKGRIKTTGITETDFLIKSFQFKVLDAGGQRSERKKWIHCFEDITAVLFVLAISEYDQNLFEDERVNRMHESIVLFDSLCNSKWFANTPFILFLNKIDIFENKIKKNPLKNYFPDYDGKPDDTNEAIKFFETNFLKINQTNKPIYVHRTCATDSKSMKFVLSAVTDMIVQQNLKKSGIM.

A lipid anchor (N-myristoyl glycine) is attached at Gly-2. Cys-3 carries the S-palmitoyl cysteine lipid modification. The G-alpha domain occupies 40–429 (KGVKLLLLGA…QQNLKKSGIM (390 aa)). The interval 43 to 56 (KLLLLGAGESGKST) is G1 motif. Residues Glu-51, Ser-52, Gly-53, Lys-54, Ser-55, and Thr-56 each coordinate GTP. Residue Ser-55 participates in Mg(2+) binding. Residues 125 to 197 (LKQIDADVAG…KDSEQFTRLS (73 aa)) form a not present in other G-proteins region. The G2 motif stretch occupies residues 249-257 (DILKGRIKT). Leu-251, Thr-257, Gly-279, Asn-345, Lys-346, Asp-348, and Ala-401 together coordinate GTP. Mg(2+) is bound at residue Thr-257. Positions 272 to 281 (FKVLDAGGQR) are G3 motif. The segment at 341 to 348 (ILFLNKID) is G4 motif. Positions 399 to 404 (TCATDS) are G5 motif.

Belongs to the G-alpha family. G(q) subfamily. In terms of assembly, g proteins are composed of 3 units; alpha, beta and gamma. The alpha chain contains the guanine nucleotide binding site. Mg(2+) is required as a cofactor.

Functionally, guanine nucleotide-binding proteins (G proteins) are involved as modulators or transducers in various transmembrane signaling systems. Involved in the mating pathway. This chain is Guanine nucleotide-binding protein subunit alpha (CAG1), found in Candida albicans (strain WO-1) (Yeast).